We begin with the raw amino-acid sequence, 527 residues long: Probable malate:quinone oxidoreductase (527 aa).

Belongs to the MQO family. It depends on FAD as a cofactor.

It catalyses the reaction (S)-malate + a quinone = a quinol + oxaloacetate. The protein operates within carbohydrate metabolism; tricarboxylic acid cycle; oxaloacetate from (S)-malate (quinone route): step 1/1. In Pectobacterium carotovorum subsp. carotovorum (strain PC1), this protein is Probable malate:quinone oxidoreductase.